A 164-amino-acid chain; its full sequence is Thiol peroxidase (164 aa).

The region spanning isoleucine 18–asparagine 163 is the Thioredoxin domain. Cysteine 60 acts as the Cysteine sulfenic acid (-SOH) intermediate in catalysis. Cysteine 60 and cysteine 93 are oxidised to a cystine.

It belongs to the peroxiredoxin family. Tpx subfamily. Homodimer.

It carries out the reaction a hydroperoxide + [thioredoxin]-dithiol = an alcohol + [thioredoxin]-disulfide + H2O. Thiol-specific peroxidase that catalyzes the reduction of hydrogen peroxide and organic hydroperoxides to water and alcohols, respectively. Plays a role in cell protection against oxidative stress by detoxifying peroxides. This Staphylococcus aureus (strain COL) protein is Thiol peroxidase.